Consider the following 672-residue polypeptide: Transcription factor tau 91 kDa subunit (672 aa).

Residues 1–158 (MAVIPAKKRG…SLGQKGRPIR (158 aa)) are required for DNA-binding. The segment at residues 6–18 (AKKRGRPRKSVVA) is a DNA-binding region (a.T hook). 2 disordered regions span residues 24 to 45 (SLAS…ASKK) and 67 to 156 (VNNV…KGRP). The segment covering 71 to 100 (DDTDDDDFVLNDEGDGEESDNVEIEFENEL) has biased composition (acidic residues). Residues 159-672 (LLKDLSSARD…AGLLTLEYLS (514 aa)) form a sufficient for interaction with TFC8 region. Cys375 and Cys383 are joined by a disulfide.

In terms of assembly, heterodimer with TFC8. Component of the TFIIIC complex composed of TFC1, TFC3, TFC4, TFC6, TFC7 and TFC8. The subunits are organized in two globular domains, tauA and tauB, connected by a proteolysis-sensitive and flexible linker. Interacts with TFC1, TFC3, TFC4 and directly with TFC8.

It is found in the nucleus. Functionally, TFIIIC mediates tRNA and 5S RNA gene activation by binding to intragenic promoter elements. Upstream of the transcription start site, TFIIIC assembles the initiation complex TFIIIB-TFIIIC-tDNA, which is sufficient for RNA polymerase III recruitment and function. Part of the tauB domain of TFIIIC that binds boxB DNA promoter sites of tRNA and similar genes. Cooperates with TFC3 in DNA binding. This is Transcription factor tau 91 kDa subunit (TFC6) from Saccharomyces cerevisiae (strain ATCC 204508 / S288c) (Baker's yeast).